Consider the following 234-residue polypeptide: UPF0758 protein STH371 (234 aa).

Residues 110 to 232 form the MPN domain; it reads DLCNPRAVFE…YTSFRERGLL (123 aa). H181, H183, and D194 together coordinate Zn(2+). The JAMM motif motif lies at 181–194; sequence HNHPSGDPTPSRED.

It belongs to the UPF0758 family.

The polypeptide is UPF0758 protein STH371 (Symbiobacterium thermophilum (strain DSM 24528 / JCM 14929 / IAM 14863 / T)).